The primary structure comprises 79 residues: UPF0180 protein BCG9842_B3897 (79 aa).

This sequence belongs to the UPF0180 family.

The protein is UPF0180 protein BCG9842_B3897 of Bacillus cereus (strain G9842).